The following is a 302-amino-acid chain: Lipoyl synthase (302 aa).

7 residues coordinate [4Fe-4S] cluster: C44, C49, C55, C70, C74, C77, and S283. The 217-residue stretch at 56 to 272 folds into the Radical SAM core domain; that stretch reads WSKKHATVMI…AKVARSKGFL (217 aa).

It belongs to the radical SAM superfamily. Lipoyl synthase family. The cofactor is [4Fe-4S] cluster.

It localises to the cytoplasm. The catalysed reaction is [[Fe-S] cluster scaffold protein carrying a second [4Fe-4S](2+) cluster] + N(6)-octanoyl-L-lysyl-[protein] + 2 oxidized [2Fe-2S]-[ferredoxin] + 2 S-adenosyl-L-methionine + 4 H(+) = [[Fe-S] cluster scaffold protein] + N(6)-[(R)-dihydrolipoyl]-L-lysyl-[protein] + 4 Fe(3+) + 2 hydrogen sulfide + 2 5'-deoxyadenosine + 2 L-methionine + 2 reduced [2Fe-2S]-[ferredoxin]. Its pathway is protein modification; protein lipoylation via endogenous pathway; protein N(6)-(lipoyl)lysine from octanoyl-[acyl-carrier-protein]: step 2/2. Its function is as follows. Catalyzes the radical-mediated insertion of two sulfur atoms into the C-6 and C-8 positions of the octanoyl moiety bound to the lipoyl domains of lipoate-dependent enzymes, thereby converting the octanoylated domains into lipoylated derivatives. The sequence is that of Lipoyl synthase from Orientia tsutsugamushi (strain Boryong) (Rickettsia tsutsugamushi).